The chain runs to 292 residues: ATP synthase gamma chain (292 aa).

It belongs to the ATPase gamma chain family. F-type ATPases have 2 components, CF(1) - the catalytic core - and CF(0) - the membrane proton channel. CF(1) has five subunits: alpha(3), beta(3), gamma(1), delta(1), epsilon(1). CF(0) has three main subunits: a, b and c.

It is found in the cell inner membrane. In terms of biological role, produces ATP from ADP in the presence of a proton gradient across the membrane. The gamma chain is believed to be important in regulating ATPase activity and the flow of protons through the CF(0) complex. In Bradyrhizobium sp. (strain ORS 278), this protein is ATP synthase gamma chain.